Reading from the N-terminus, the 209-residue chain is Probable glutathione peroxidase 8-A (209 aa).

The chain crosses the membrane as a helical span at residues 18–40 (VSVVFLSMLLCTGILCVLQLGFL). Residue C79 is part of the active site.

Belongs to the glutathione peroxidase family.

It localises to the membrane. It carries out the reaction 2 glutathione + H2O2 = glutathione disulfide + 2 H2O. This is Probable glutathione peroxidase 8-A (gpx8-a) from Xenopus laevis (African clawed frog).